The sequence spans 476 residues: Eukaryotic translation initiation factor 3 subunit L (476 aa).

Residues 257–452 (DAIRMFSHIL…DLDYALEKDL (196 aa)) form the PCI domain.

The protein belongs to the eIF-3 subunit L family. As to quaternary structure, component of the eukaryotic translation initiation factor 3 (eIF-3) complex.

It localises to the cytoplasm. In terms of biological role, component of the eukaryotic translation initiation factor 3 (eIF-3) complex, which is involved in protein synthesis of a specialized repertoire of mRNAs and, together with other initiation factors, stimulates binding of mRNA and methionyl-tRNAi to the 40S ribosome. The eIF-3 complex specifically targets and initiates translation of a subset of mRNAs involved in cell proliferation. This is Eukaryotic translation initiation factor 3 subunit L from Aspergillus terreus (strain NIH 2624 / FGSC A1156).